Here is a 305-residue protein sequence, read N- to C-terminus: Tyrosine recombinase XerC (305 aa).

In terms of domain architecture, Core-binding (CB) spans 4–95; that stretch reads TSIQALINKW…AVKNFYRFLE (92 aa). A Tyr recombinase domain is found at 116–298; sequence LLPKALSEDD…SIKHLEAVYT (183 aa). Active-site residues include R159, K182, H250, R253, and H276. The O-(3'-phospho-DNA)-tyrosine intermediate role is filled by Y285.

This sequence belongs to the 'phage' integrase family. XerC subfamily. In terms of assembly, forms a cyclic heterotetrameric complex composed of two molecules of XerC and two molecules of XerD.

Its subcellular location is the cytoplasm. Its function is as follows. Site-specific tyrosine recombinase, which acts by catalyzing the cutting and rejoining of the recombining DNA molecules. The XerC-XerD complex is essential to convert dimers of the bacterial chromosome into monomers to permit their segregation at cell division. It also contributes to the segregational stability of plasmids. This Rickettsia conorii (strain ATCC VR-613 / Malish 7) protein is Tyrosine recombinase XerC.